Reading from the N-terminus, the 548-residue chain is 2-succinyl-5-enolpyruvyl-6-hydroxy-3-cyclohexene-1-carboxylate synthase (548 aa).

This sequence belongs to the TPP enzyme family. MenD subfamily. As to quaternary structure, homodimer. Mg(2+) is required as a cofactor. It depends on Mn(2+) as a cofactor. The cofactor is thiamine diphosphate.

The catalysed reaction is isochorismate + 2-oxoglutarate + H(+) = 5-enolpyruvoyl-6-hydroxy-2-succinyl-cyclohex-3-ene-1-carboxylate + CO2. It participates in quinol/quinone metabolism; 1,4-dihydroxy-2-naphthoate biosynthesis; 1,4-dihydroxy-2-naphthoate from chorismate: step 2/7. The protein operates within quinol/quinone metabolism; menaquinone biosynthesis. Functionally, catalyzes the thiamine diphosphate-dependent decarboxylation of 2-oxoglutarate and the subsequent addition of the resulting succinic semialdehyde-thiamine pyrophosphate anion to isochorismate to yield 2-succinyl-5-enolpyruvyl-6-hydroxy-3-cyclohexene-1-carboxylate (SEPHCHC). The sequence is that of 2-succinyl-5-enolpyruvyl-6-hydroxy-3-cyclohexene-1-carboxylate synthase from Mycolicibacterium vanbaalenii (strain DSM 7251 / JCM 13017 / BCRC 16820 / KCTC 9966 / NRRL B-24157 / PYR-1) (Mycobacterium vanbaalenii).